The sequence spans 353 residues: Nicotinate-nucleotide--dimethylbenzimidazole phosphoribosyltransferase (353 aa).

The active-site Proton acceptor is Glu-318.

The protein belongs to the CobT family.

It carries out the reaction 5,6-dimethylbenzimidazole + nicotinate beta-D-ribonucleotide = alpha-ribazole 5'-phosphate + nicotinate + H(+). The protein operates within nucleoside biosynthesis; alpha-ribazole biosynthesis; alpha-ribazole from 5,6-dimethylbenzimidazole: step 1/2. Functionally, catalyzes the synthesis of alpha-ribazole-5'-phosphate from nicotinate mononucleotide (NAMN) and 5,6-dimethylbenzimidazole (DMB). This chain is Nicotinate-nucleotide--dimethylbenzimidazole phosphoribosyltransferase, found in Chloroflexus aggregans (strain MD-66 / DSM 9485).